Reading from the N-terminus, the 244-residue chain is 14-3-3 protein homolog 1 (244 aa).

Belongs to the 14-3-3 family.

The protein is 14-3-3 protein homolog 1 of Echinococcus multilocularis (Fox tapeworm).